A 244-amino-acid polypeptide reads, in one-letter code: Mannose-binding protein C (244 aa).

The first 18 residues, 1-18 (MSIFTSFLLLCVVTVVYA), serve as a signal peptide directing secretion. One can recognise a Collagen-like domain in the interval 38–96 (GLNGFPGKDGRDGAKGEKGEPGQGLRGLQGPPGKVGPTGPPGNPGLKGAVGPKGDRGDR). The disordered stretch occupies residues 40–101 (NGFPGKDGRD…DRGDRAEFDT (62 aa)). Position 43 is a 4-hydroxyproline (Pro-43). Residues 45 to 57 (KDGRDGAKGEKGE) are compositionally biased toward basic and acidic residues. Pro-58, Pro-69, Pro-78, and Pro-81 each carry 4-hydroxyproline. The span at 65 to 74 (LQGPPGKVGP) shows a compositional bias: low complexity. Over residues 90 to 99 (KGDRGDRAEF) the composition is skewed to basic and acidic residues. Residues 108–126 (IAALRSELRALRNWVLFSL) adopt a coiled-coil conformation. In terms of domain architecture, C-type lectin spans 129–241 (KVGKKYFVSS…CSDSFLAICE (113 aa)). 2 disulfide bridges follow: Cys-151/Cys-240 and Cys-218/Cys-232. A glycan (N-linked (GlcNAc...) asparagine) is linked at Asn-210.

Oligomeric complex of 3 or more homotrimers. Interacts with MASP1 and MASP2. Interacts with MEP1A and MEP1B and may inhibit their catalytic activity. Hydroxylation on proline residues within the sequence motif, GXPG, is most likely to be 4-hydroxy as this fits the requirement for 4-hydroxylation in vertebrates.

It localises to the secreted. Its function is as follows. Calcium-dependent lectin involved in innate immune defense. Binds mannose, fucose and N-acetylglucosamine on different microorganisms and activates the lectin complement pathway. Binds to late apoptotic cells, as well as to apoptotic blebs and to necrotic cells, but not to early apoptotic cells, facilitating their uptake by macrophages. This is Mannose-binding protein C (Mbl2) from Mus musculus (Mouse).